The sequence spans 116 residues: Toxin ICK-10 (116 aa).

The first 19 residues, 1–19 (MMKLYSLVIIATLAAAAFA), serve as a signal peptide directing secretion. 4 disulfide bridges follow: cysteine 56–cysteine 71, cysteine 64–cysteine 77, cysteine 68–cysteine 113, and cysteine 70–cysteine 84.

It belongs to the neurotoxin 25 family. ICK-8 subfamily. As to expression, expressed by the venom gland.

It is found in the secreted. In terms of biological role, ion channel inhibitor. This is Toxin ICK-10 from Trittame loki (Brush-footed trapdoor spider).